A 132-amino-acid polypeptide reads, in one-letter code: Ribosome-binding factor A (132 aa).

This sequence belongs to the RbfA family. Monomer. Binds 30S ribosomal subunits, but not 50S ribosomal subunits or 70S ribosomes.

It localises to the cytoplasm. Its function is as follows. One of several proteins that assist in the late maturation steps of the functional core of the 30S ribosomal subunit. Associates with free 30S ribosomal subunits (but not with 30S subunits that are part of 70S ribosomes or polysomes). Required for efficient processing of 16S rRNA. May interact with the 5'-terminal helix region of 16S rRNA. The chain is Ribosome-binding factor A from Burkholderia multivorans (strain ATCC 17616 / 249).